The following is a 315-amino-acid chain: Zinc finger CCCH domain-containing protein 23 (315 aa).

The segment at 1 to 21 is disordered; that stretch reads MMIGENKNRPHPTIHIPQWDQ. 2 C3H1-type zinc fingers span residues 131-157 and 165-189; these read YSGT…HGVF and RYRT…HTTE.

The sequence is that of Zinc finger CCCH domain-containing protein 23 from Arabidopsis thaliana (Mouse-ear cress).